A 295-amino-acid chain; its full sequence is Undecaprenyl-diphosphatase (295 aa).

6 consecutive transmembrane segments (helical) span residues Pro39–Phe59, Trp97–Ile117, Leu121–Val141, Ala198–Ile218, Ala232–Leu252, and Phe263–Leu283.

This sequence belongs to the UppP family.

The protein resides in the cell membrane. The enzyme catalyses di-trans,octa-cis-undecaprenyl diphosphate + H2O = di-trans,octa-cis-undecaprenyl phosphate + phosphate + H(+). Catalyzes the dephosphorylation of undecaprenyl diphosphate (UPP). Confers resistance to bacitracin. This chain is Undecaprenyl-diphosphatase, found in Bifidobacterium animalis subsp. lactis (strain AD011).